Consider the following 193-residue polypeptide: Interleukin-23 subunit alpha (193 aa).

The N-terminal stretch at 1-22 is a signal peptide; sequence MLGSRAVMLMLLLLLLPWTSQG.

This sequence belongs to the IL-6 superfamily. As to quaternary structure, heterodimer with IL12B; disulfide-linked. The heterodimer is known as interleukin IL-23. Interacts with IL23R; this interaction enables recruitment of IL12RB1.

It is found in the secreted. In terms of biological role, associates with IL12B to form the pro-inflammatory cytokine IL-23 that plays different roles in innate and adaptive immunity. Released by antigen-presenting cells such as dendritic cells or macrophages, binds to a heterodimeric receptor complex composed of IL12RB1 and IL23R to activate JAK2 and TYK2 which then phosphorylate the receptor to form a docking site leading to the phosphorylation of STAT3 and STAT4. This process leads to activation of several pathways including p38 MAPK or NF-kappa-B and promotes the production of pro-inflammatory cytokines such as interleukin-17A/IL17A. In turn, participates in the early and effective intracellular bacterial clearance. Promotes the expansion and survival of T-helper 17 cells, a CD4-positive helper T-cell subset that produces IL-17, as well as other IL-17-producing cells. The polypeptide is Interleukin-23 subunit alpha (IL23A) (Sus scrofa (Pig)).